The primary structure comprises 1267 residues: BOS complex subunit NOMO2 (1267 aa).

Positions Met-1–Gly-31 are cleaved as a signal peptide. The Lumenal portion of the chain corresponds to Ser-32 to Asp-1155. Asn-50, Asn-218, and Asn-618 each carry an N-linked (GlcNAc...) asparagine glycan. The chain crosses the membrane as a helical span at residues Ile-1156–Asn-1176. Topologically, residues His-1177 to Tyr-1267 are cytoplasmic. The interval Gly-1198–Thr-1219 is disordered.

In terms of assembly, component of the back of Sec61 (BOS) complex, composed of NCLN/Nicalin, NOMO (NOMO1, NOMO2 or NOMO3) and TMEM147. The BOS complex is part of the multi-pass translocon (MPT) complex, composed of three subcomplexes, the GEL complex (composed of RAB5IF/OPTI and TMCO1), the BOS complex (composed of NCLN/Nicalin, NOMO and TMEM147) and the PAT complex (composed of WDR83OS/Asterix and CCDC47). The MPT complex associates with the SEC61 complex. Due to the strong similarity between NOMO1, NOMO2 and NOMO3, similar interaction pattern probably occur for the three gene copies. In terms of tissue distribution, highly expressed in pancreas and skeletal muscle and, at lower levels, in heart.

The protein localises to the endoplasmic reticulum membrane. In terms of biological role, component of the multi-pass translocon (MPT) complex that mediates insertion of multi-pass membrane proteins into the lipid bilayer of membranes. The MPT complex takes over after the SEC61 complex: following membrane insertion of the first few transmembrane segments of proteins by the SEC61 complex, the MPT complex occludes the lateral gate of the SEC61 complex to promote insertion of subsequent transmembrane regions. This Homo sapiens (Human) protein is BOS complex subunit NOMO2 (NOMO2).